We begin with the raw amino-acid sequence, 386 residues long: Probable zinc transporter zrg17 (386 aa).

A run of 6 helical transmembrane segments spans residues 102 to 122 (ILFF…ILLT), 128 to 148 (IVEG…SFLV), 163 to 183 (MELL…MNLL), 208 to 228 (VHIH…FALL), 243 to 263 (FFHG…SLGY), and 268 to 288 (FLSH…GFSI).

Belongs to the cation diffusion facilitator (CDF) transporter (TC 2.A.4) family. SLC30A subfamily. As to quaternary structure, interacts with cis4.

Its subcellular location is the cytoplasm. The protein localises to the nucleus membrane. In terms of biological role, probable transporter involved in the regulation of zinc homeostasis. The protein is Probable zinc transporter zrg17 (zrg17) of Schizosaccharomyces pombe (strain 972 / ATCC 24843) (Fission yeast).